Consider the following 196-residue polypeptide: uncharacterized protein (196 aa).

This sequence to H.influenzae HI_0431.

This is an uncharacterized protein from Escherichia coli (strain K12).